We begin with the raw amino-acid sequence, 171 residues long: ATP synthase subunit b (171 aa).

A helical membrane pass occupies residues phenylalanine 2–leucine 22.

Belongs to the ATPase B chain family. In terms of assembly, F-type ATPases have 2 components, F(1) - the catalytic core - and F(0) - the membrane proton channel. F(1) has five subunits: alpha(3), beta(3), gamma(1), delta(1), epsilon(1). F(0) has three main subunits: a(1), b(2) and c(10-14). The alpha and beta chains form an alternating ring which encloses part of the gamma chain. F(1) is attached to F(0) by a central stalk formed by the gamma and epsilon chains, while a peripheral stalk is formed by the delta and b chains.

Its subcellular location is the cell inner membrane. F(1)F(0) ATP synthase produces ATP from ADP in the presence of a proton or sodium gradient. F-type ATPases consist of two structural domains, F(1) containing the extramembraneous catalytic core and F(0) containing the membrane proton channel, linked together by a central stalk and a peripheral stalk. During catalysis, ATP synthesis in the catalytic domain of F(1) is coupled via a rotary mechanism of the central stalk subunits to proton translocation. Functionally, component of the F(0) channel, it forms part of the peripheral stalk, linking F(1) to F(0). This chain is ATP synthase subunit b, found in Helicobacter pylori (strain G27).